Consider the following 357-residue polypeptide: DNA replication and repair protein RecF (357 aa).

30 to 37 is a binding site for ATP; it reads GANGSGKT.

This sequence belongs to the RecF family.

It is found in the cytoplasm. Its function is as follows. The RecF protein is involved in DNA metabolism; it is required for DNA replication and normal SOS inducibility. RecF binds preferentially to single-stranded, linear DNA. It also seems to bind ATP. This chain is DNA replication and repair protein RecF, found in Shigella dysenteriae serotype 1 (strain Sd197).